Here is a 523-residue protein sequence, read N- to C-terminus: NEDD8-activating enzyme E1 regulatory subunit AXL (523 aa).

The protein belongs to the ubiquitin-activating E1 family. ULA1 subfamily. Heterodimer of ECR1 and AXL1. The complex binds to RUB1/NEDD8 and RCE1.

It is found in the nucleus. It participates in protein modification; protein neddylation. Its function is as follows. Regulatory subunit of the dimeric ECR1-AXL1 E1 enzyme. E1 activates RUB1/NEDD8 by first adenylating its C-terminal glycine residue with ATP, thereafter linking this residue to the side chain of the catalytic cysteine, yielding a RUB1-ECR1 thioester and free AMP. E1 finally transfers RUB1 to the catalytic cysteine of RCE1. May function redundantly with AXR1 in the RUB conjugating pathway. Seems not to be functionally equivalent to AXR1 in vivo. The polypeptide is NEDD8-activating enzyme E1 regulatory subunit AXL (Arabidopsis thaliana (Mouse-ear cress)).